Here is a 432-residue protein sequence, read N- to C-terminus: Glutamate-1-semialdehyde 2,1-aminomutase 2 (432 aa).

N6-(pyridoxal phosphate)lysine is present on Lys-268.

The protein belongs to the class-III pyridoxal-phosphate-dependent aminotransferase family. HemL subfamily. As to quaternary structure, homodimer. Requires pyridoxal 5'-phosphate as cofactor.

Its subcellular location is the cytoplasm. The catalysed reaction is (S)-4-amino-5-oxopentanoate = 5-aminolevulinate. It participates in porphyrin-containing compound metabolism; protoporphyrin-IX biosynthesis; 5-aminolevulinate from L-glutamyl-tRNA(Glu): step 2/2. The sequence is that of Glutamate-1-semialdehyde 2,1-aminomutase 2 from Listeria monocytogenes serotype 4b (strain CLIP80459).